Reading from the N-terminus, the 334-residue chain is Protein-methionine-sulfoxide reductase catalytic subunit MsrP (334 aa).

Positions 1 to 44 form a signal peptide, tat-type signal; the sequence is MKKNQFLKESDVTAESVFFMKRRQVLKALGISAAAFSLPHAAHA. Mo-molybdopterin-binding positions include Asn88, 91-92, Cys146, Thr181, Asn233, Arg238, and 249-251; these read YE and GIK.

It belongs to the MsrP family. Heterodimer of a catalytic subunit (MsrP) and a heme-binding subunit (MsrQ). It depends on Mo-molybdopterin as a cofactor. Post-translationally, predicted to be exported by the Tat system. The position of the signal peptide cleavage has not been experimentally proven.

The protein localises to the periplasm. It catalyses the reaction L-methionyl-[protein] + a quinone + H2O = L-methionyl-(S)-S-oxide-[protein] + a quinol. The catalysed reaction is L-methionyl-[protein] + a quinone + H2O = L-methionyl-(R)-S-oxide-[protein] + a quinol. Part of the MsrPQ system that repairs oxidized periplasmic proteins containing methionine sulfoxide residues (Met-O), using respiratory chain electrons. Thus protects these proteins from oxidative-stress damage caused by reactive species of oxygen and chlorine generated by the host defense mechanisms. MsrPQ is essential for the maintenance of envelope integrity under bleach stress, rescuing a wide series of structurally unrelated periplasmic proteins from methionine oxidation, including the primary periplasmic chaperone SurA and the lipoprotein Pal. The catalytic subunit MsrP is non-stereospecific, being able to reduce both (R-) and (S-) diastereoisomers of methionine sulfoxide. The protein is Protein-methionine-sulfoxide reductase catalytic subunit MsrP of Escherichia coli O6:H1 (strain CFT073 / ATCC 700928 / UPEC).